The primary structure comprises 468 residues: Nuclear pore complex protein Nup50 (468 aa).

Residues 1–16 show a composition bias toward basic and acidic residues; sequence MAKRNAEKELTDRNWD. A disordered region spans residues 1–26; sequence MAKRNAEKELTDRNWDQEDEAEEVGT. Ala-2 bears the N-acetylalanine mark. Lys-8 is modified (N6-acetyllysine). A Phosphoserine modification is found at Ser-52. The stretch at 76–77 is repeat 1; that stretch reads FG. The segment at 76 to 304 is 5 X 2 AA repeats of F-G; the sequence is FGSGAGGKPL…FSPGNSSLFG (229 aa). Lys-83 carries the N6-acetyllysine modification. The stretch at 113–114 is repeat 2; it reads FG. Disordered stretches follow at residues 122-148 and 201-224; these read TTLVDKVSNPKTNGDSQQPSSSGLASS and HGNSGRNSESESNKVAAETQSPSL. At Lys-127 the chain carries N6-acetyllysine. The segment covering 137-148 has biased composition (low complexity); sequence SQQPSSSGLASS. The tract at residues 144–206 is binding to CDKN1B; that stretch reads GLASSKACVG…IEQQHGNSGR (63 aa). Residues Ser-208 and Ser-221 each carry the phosphoserine modification. Repeat 3 spans residues 225 to 226; the sequence is FG. Ser-234 is modified (phosphoserine). The disordered stretch occupies residues 238-269; the sequence is FHGNKTEDTPDKKMEVASEKKTDPSSLGATSA. Basic and acidic residues predominate over residues 241 to 260; that stretch reads NKTEDTPDKKMEVASEKKTD. Residues Thr-246 and Thr-259 each carry the phosphothreonine modification. Ser-270 carries the phosphoserine modification. The stretch at 273-274 is repeat 4; the sequence is FG. A Phosphoserine modification is found at Ser-296. Copy 5 of the repeat occupies 303-304; it reads FG. A compositionally biased stretch (polar residues) spans 304–317; sequence GKDTTQSKPVSSPF. The disordered stretch occupies residues 304–345; the sequence is GKDTTQSKPVSSPFPTKPLEGQAEGDSGECKGGDEEENDEPP. A RanBD1 domain is found at 335–468; the sequence is GGDEEENDEP…HKILLEKKDA (134 aa). A Glycyl lysine isopeptide (Lys-Gly) (interchain with G-Cter in SUMO2) cross-link involves residue Lys-353. Lys-450 bears the N6-acetyllysine mark.

Interacts with Importin alpha-2, Importin beta, Importin beta-2, NUP153, Ran binding protein 7, CDKN1B and itself. Does not interact with TPR. As to expression, ubiquitous. Highest levels in testis, peripheral blood leukocytes and fetal liver.

It is found in the nucleus. The protein localises to the nuclear pore complex. It localises to the nucleus membrane. In terms of biological role, component of the nuclear pore complex that has a direct role in nuclear protein import. Actively displaces NLSs from importin-alpha, and facilitates disassembly of the importin-alpha:beta-cargo complex and importin recycling. Interacts with regulatory proteins of cell cycle progression including CDKN1B. This interaction is required for correct intracellular transport and degradation of CDKN1B. The protein is Nuclear pore complex protein Nup50 (NUP50) of Homo sapiens (Human).